The sequence spans 103 residues: MENIFFSKLTQVFIVALLCIFIYRTESAMSSHREQLSLTGRRMMANIPYPYGGIYVKPPPLKSKDSNQKGKRGETYYKPNSEIGTGPSHSGHGGSSIEHVSSP.

An N-terminal signal peptide occupies residues 1–25 (MENIFFSKLTQVFIVALLCIFIYRT). Residues 54–103 (IYVKPPPLKSKDSNQKGKRGETYYKPNSEIGTGPSHSGHGGSSIEHVSSP) are disordered. Residues 62–75 (KSKDSNQKGKRGET) are compositionally biased toward basic and acidic residues. The short motif at 82-96 (EIGTGPSHSGHGGSS) is the SCOOP motif element. Residues 84-103 (GTGPSHSGHGGSSIEHVSSP) show a composition bias toward low complexity. A SxS motif essential for MIK2 binding motif is present at residues 88–90 (SHS).

The protein belongs to the serine rich endogenous peptide (SCOOP) phytocytokine family. Interacts with MIK2 (via extracellular leucine-rich repeat domain); this interaction triggers the formation of complex between MIK2 and the BAK1/SERK3 and SERK4 coreceptors, and subsequent BAK1 activation by phosphorylation. As to expression, mostly expressed in seedlings shoots and roots, and, to a lower extent, in leaves, but barely in flowers.

It is found in the cell membrane. It localises to the secreted. The protein localises to the extracellular space. The protein resides in the apoplast. Brassicaceae-specific phytocytokine (plant endogenous peptide released into the apoplast) perceived by MIK2 in a BAK1/SERK3 and SERK4 coreceptors-dependent manner, that modulates various physiological and antimicrobial processes including growth prevention and reactive oxygen species (ROS) response regulation. The chain is Serine rich endogenous peptide 9 from Arabidopsis thaliana (Mouse-ear cress).